A 130-amino-acid chain; its full sequence is UPF0102 protein RSc3265 (130 aa).

This sequence belongs to the UPF0102 family.

The protein is UPF0102 protein RSc3265 of Ralstonia nicotianae (strain ATCC BAA-1114 / GMI1000) (Ralstonia solanacearum).